The chain runs to 437 residues: Glutamyl-tRNA reductase (437 aa).

Substrate-binding positions include T46–R49, S111, E116–E118, and Q122. Catalysis depends on C47, which acts as the Nucleophile. An NADP(+)-binding site is contributed by G192 to A197. The tract at residues P413–G437 is disordered. Residues D426–G437 show a composition bias toward basic and acidic residues.

Belongs to the glutamyl-tRNA reductase family. Homodimer.

It carries out the reaction (S)-4-amino-5-oxopentanoate + tRNA(Glu) + NADP(+) = L-glutamyl-tRNA(Glu) + NADPH + H(+). It participates in porphyrin-containing compound metabolism; protoporphyrin-IX biosynthesis; 5-aminolevulinate from L-glutamyl-tRNA(Glu): step 1/2. Catalyzes the NADPH-dependent reduction of glutamyl-tRNA(Glu) to glutamate 1-semialdehyde (GSA). The polypeptide is Glutamyl-tRNA reductase (Kocuria rhizophila (strain ATCC 9341 / DSM 348 / NBRC 103217 / DC2201)).